Reading from the N-terminus, the 528-residue chain is MDSAFVLPHPASMGASCILGLLLLTILRALLIPKKALPLAINHHRWDIFNRRAIQDFTANPQDLIKAGLKKVIDPQIAPRFAKGTFLVLPERYSEEVKNDERFSAYEALSRSSPQIILLELPGFESVFEGLMHNDVVLPGVAAMNRQLASLTSPMSEEVSHYLQTNWTDDPDWHTQSVSASMSGLIGQAAARIIVGPELCRNKEYHAITLSYTMSRGRALAAIHAWPRALHPLIHWFLPSCRNVRTQIRRAEKLITPILERTRRHRARGDPPQAFSTLAWSDEYARAQGRSYNATLAQMRFTSSSIHNTSDLLGKVMLRICQRPDLIEPLRREIVAAFDGGSGAQHHSLGKLKLMESVMKETQRLEPAAERVSYPPPLTPERLTGYSIVNMFRVAKETVTLSDGTTIPKGTIFGFSYQNRFDPSMYPDPETFDPYRFMRMRQDPVQASLASFTKARSTHLSFGLGRHACPGRFMANDMIKLALSHILLKYDFKLVGEELPKLEMHGFVYAREPTAQILVRRRQEEVVL.

Residues 5–27 (FVLPHPASMGASCILGLLLLTIL) traverse the membrane as a helical segment. Cys469 contributes to the heme binding site.

Belongs to the cytochrome P450 family. Heme is required as a cofactor.

It is found in the membrane. It functions in the pathway alkaloid biosynthesis. Nonribosomal peptide synthetase; part of the gene cluster that mediates the biosynthesis of the ergot alkaloids lentopeptins A and B. Within the pathway, lenC catalyzes the post-NRPS oxidative modification steps using as substrate the N-acyldiketopiperazine intermediate produced by the NRPS lenA. Lentopeptin A forms via a stereospecific hydroxylation, followed by a spontaneous bicyclic lactam core formation, while lentopeptin B is produced through an initial dehydrogenation, followed by a bicyclic lactam core formation and stereospecific hydration. The phenylalanine ammonia-lyase lenB provides the cinnamic acid starter unit to the NRPS lenA for the synthesis of the N-acyldiketopiperazine intermediate which in turn is converted into lentopeptins A and B by lenC. The protein is Cytochrome P450 monooxygenase lenC of Aspergillus lentulus.